A 424-amino-acid polypeptide reads, in one-letter code: Glutamate-1-semialdehyde 2,1-aminomutase (424 aa).

Lys263 is subject to N6-(pyridoxal phosphate)lysine.

It belongs to the class-III pyridoxal-phosphate-dependent aminotransferase family. HemL subfamily. In terms of assembly, homodimer. The cofactor is pyridoxal 5'-phosphate.

The protein localises to the cytoplasm. The enzyme catalyses (S)-4-amino-5-oxopentanoate = 5-aminolevulinate. It participates in porphyrin-containing compound metabolism; protoporphyrin-IX biosynthesis; 5-aminolevulinate from L-glutamyl-tRNA(Glu): step 2/2. This chain is Glutamate-1-semialdehyde 2,1-aminomutase, found in Campylobacter jejuni subsp. doylei (strain ATCC BAA-1458 / RM4099 / 269.97).